We begin with the raw amino-acid sequence, 123 residues long: Small ribosomal subunit protein uS12 (123 aa).

Residues 1–30 are disordered; it reads MPTIQQLIRKPRQPKIKRSKSQHMEGCPQK. Over residues 9–21 the composition is skewed to basic residues; it reads RKPRQPKIKRSKS. The residue at position 89 (D89) is a 3-methylthioaspartic acid. A disordered region spans residues 104–123; it reads TQGVKDRRQRRSKYGAKRPK. Residues 110-123 show a composition bias toward basic residues; the sequence is RRQRRSKYGAKRPK.

Belongs to the universal ribosomal protein uS12 family. Part of the 30S ribosomal subunit. Contacts proteins S8 and S17. May interact with IF1 in the 30S initiation complex.

With S4 and S5 plays an important role in translational accuracy. Its function is as follows. Interacts with and stabilizes bases of the 16S rRNA that are involved in tRNA selection in the A site and with the mRNA backbone. Located at the interface of the 30S and 50S subunits, it traverses the body of the 30S subunit contacting proteins on the other side and probably holding the rRNA structure together. The combined cluster of proteins S8, S12 and S17 appears to hold together the shoulder and platform of the 30S subunit. This is Small ribosomal subunit protein uS12 from Jannaschia sp. (strain CCS1).